Reading from the N-terminus, the 525-residue chain is GMP synthase [glutamine-hydrolyzing] (525 aa).

Residues arginine 9 to glutamine 207 form the Glutamine amidotransferase type-1 domain. Residue cysteine 86 is the Nucleophile of the active site. Residues histidine 181 and glutamate 183 contribute to the active site. The region spanning tryptophan 208–arginine 400 is the GMPS ATP-PPase domain. ATP is bound at residue serine 235–serine 241.

In terms of assembly, homodimer.

It carries out the reaction XMP + L-glutamine + ATP + H2O = GMP + L-glutamate + AMP + diphosphate + 2 H(+). Its pathway is purine metabolism; GMP biosynthesis; GMP from XMP (L-Gln route): step 1/1. Its function is as follows. Catalyzes the synthesis of GMP from XMP. The protein is GMP synthase [glutamine-hydrolyzing] of Idiomarina loihiensis (strain ATCC BAA-735 / DSM 15497 / L2-TR).